Here is a 431-residue protein sequence, read N- to C-terminus: Protein SHQ1 homolog (431 aa).

Belongs to the SHQ1 family.

In terms of biological role, required for the quantitative accumulation of H/ACA ribonucleoproteins (RNPs). The polypeptide is Protein SHQ1 homolog (Caenorhabditis elegans).